Consider the following 174-residue polypeptide: Protein-export protein SecB (174 aa).

It belongs to the SecB family. Homotetramer, a dimer of dimers. One homotetramer interacts with 1 SecA dimer.

The protein resides in the cytoplasm. Functionally, one of the proteins required for the normal export of preproteins out of the cell cytoplasm. It is a molecular chaperone that binds to a subset of precursor proteins, maintaining them in a translocation-competent state. It also specifically binds to its receptor SecA. This is Protein-export protein SecB from Ehrlichia ruminantium (strain Gardel).